Here is a 98-residue protein sequence, read N- to C-terminus: Protein S100-A13 (98 aa).

In terms of domain architecture, EF-hand spans 18–53 (TTFFTFAGREGRKGSLSVNEFKELVTQQLPHLLKDV). Positions 32, 37, 64, 66, 68, 70, and 75 each coordinate Ca(2+). Phosphoserine is present on Ser32.

Belongs to the S-100 family. As to quaternary structure, homodimer. Part of a copper-dependent multiprotein complex containing S100A13, FGF1 and SYT1. Interacts with FGF1 and SYT1. Interacts with IL1A.

It is found in the cytoplasm. The protein resides in the secreted. In terms of biological role, plays a role in the export of proteins that lack a signal peptide and are secreted by an alternative pathway. Binds two calcium ions per subunit. Binds one copper ion. Binding of one copper ion does not interfere with calcium binding. Required for the copper-dependent stress-induced export of IL1A and FGF1. The calcium-free protein binds to lipid vesicles containing phosphatidylserine, but not to vesicles containing phosphatidylcholine. The sequence is that of Protein S100-A13 (S100A13) from Bos taurus (Bovine).